The primary structure comprises 227 residues: Cytochrome c oxidase subunit 2 (227 aa).

Residues 1 to 14 (MAYPFQLGLQDATS) lie on the Mitochondrial intermembrane side of the membrane. The helical transmembrane segment at 15–45 (PIMEELTNFHDHTLMIVFLISSLVLYIISLM) threads the bilayer. Residues 46–59 (LTTKLTHTSTMDAQ) lie on the Mitochondrial matrix side of the membrane. The helical transmembrane segment at 60–87 (EVETIWTILPAVILILIALPSLRILYMM) threads the bilayer. Over 88 to 227 (DEINNPVLTV…YFENWSASMI (140 aa)) the chain is Mitochondrial intermembrane. His161, Cys196, Glu198, Cys200, His204, and Met207 together coordinate Cu cation. Glu198 serves as a coordination point for Mg(2+). At Tyr218 the chain carries Phosphotyrosine.

This sequence belongs to the cytochrome c oxidase subunit 2 family. As to quaternary structure, component of the cytochrome c oxidase (complex IV, CIV), a multisubunit enzyme composed of 14 subunits. The complex is composed of a catalytic core of 3 subunits MT-CO1, MT-CO2 and MT-CO3, encoded in the mitochondrial DNA, and 11 supernumerary subunits COX4I, COX5A, COX5B, COX6A, COX6B, COX6C, COX7A, COX7B, COX7C, COX8 and NDUFA4, which are encoded in the nuclear genome. The complex exists as a monomer or a dimer and forms supercomplexes (SCs) in the inner mitochondrial membrane with NADH-ubiquinone oxidoreductase (complex I, CI) and ubiquinol-cytochrome c oxidoreductase (cytochrome b-c1 complex, complex III, CIII), resulting in different assemblies (supercomplex SCI(1)III(2)IV(1) and megacomplex MCI(2)III(2)IV(2)). Found in a complex with TMEM177, COA6, COX18, COX20, SCO1 and SCO2. Interacts with TMEM177 in a COX20-dependent manner. Interacts with COX20. Interacts with COX16. The cofactor is Cu cation.

The protein localises to the mitochondrion inner membrane. It catalyses the reaction 4 Fe(II)-[cytochrome c] + O2 + 8 H(+)(in) = 4 Fe(III)-[cytochrome c] + 2 H2O + 4 H(+)(out). In terms of biological role, component of the cytochrome c oxidase, the last enzyme in the mitochondrial electron transport chain which drives oxidative phosphorylation. The respiratory chain contains 3 multisubunit complexes succinate dehydrogenase (complex II, CII), ubiquinol-cytochrome c oxidoreductase (cytochrome b-c1 complex, complex III, CIII) and cytochrome c oxidase (complex IV, CIV), that cooperate to transfer electrons derived from NADH and succinate to molecular oxygen, creating an electrochemical gradient over the inner membrane that drives transmembrane transport and the ATP synthase. Cytochrome c oxidase is the component of the respiratory chain that catalyzes the reduction of oxygen to water. Electrons originating from reduced cytochrome c in the intermembrane space (IMS) are transferred via the dinuclear copper A center (CU(A)) of subunit 2 and heme A of subunit 1 to the active site in subunit 1, a binuclear center (BNC) formed by heme A3 and copper B (CU(B)). The BNC reduces molecular oxygen to 2 water molecules using 4 electrons from cytochrome c in the IMS and 4 protons from the mitochondrial matrix. The sequence is that of Cytochrome c oxidase subunit 2 (MT-CO2) from Dacnomys millardi (Millard's rat).